Here is a 204-residue protein sequence, read N- to C-terminus: MQSALVGSWHNNGFYGHYRSQFKSESAREYHLAAKPQPPAVFLQRCQEPAQRHFFSKHDNRTSFDKGPYCLLQGIGRRKDLERLWQRHTFLRWAPCEIELRQQGPLESSYQADFRPGPGLSGLPQHLIHFVQVQPSHTRTTYQQNFCCPSQGGHYGSYKVGPQAPVTDVLPDLPGIPRPKLLQHYLHAGVSECLNWSRALNKDS.

It is found in the cell projection. The protein localises to the cilium. The protein is Ciliary microtubule inner protein 7 of Homo sapiens (Human).